Here is a 221-residue protein sequence, read N- to C-terminus: uncharacterized protein (221 aa).

This is an uncharacterized protein from Treponema pallidum (strain Nichols).